Consider the following 395-residue polypeptide: XK-related protein 8 (395 aa).

At 1–12 (MPWSSRGALLRD) the chain is on the cytoplasmic side. Residues 13–33 (LVLGVLGTAAFLLDLGTDLWA) traverse the membrane as a helical segment. Residues 34–47 (AVQYALGGRYLWAA) are Extracellular-facing. The chain crosses the membrane as a helical span at residues 48-68 (LVLALLGLASVALQLFSWLWL). At 69–158 (RADPAGLHGS…VLAIMLQSGR (90 aa)) the chain is on the cytoplasmic side. Residues 159–179 (AEYYQWVGICTSFLGISWALL) traverse the membrane as a helical segment. At 180 to 200 (DYHRALRTCLPSRPLLGLGSS) the chain is on the extracellular side. A helical membrane pass occupies residues 201–221 (VIYFLWNLLLLWPRVLAVALF). Residues 222–223 (SA) are Cytoplasmic-facing. A helical membrane pass occupies residues 224–244 (LFPSYVALHFLGLWLVLLLWV). At 245–258 (WLQGTDFMPDPSSE) the chain is on the extracellular side. A helical membrane pass occupies residues 259-279 (WLYQVTVATILYFSWFNVAEG). The Cytoplasmic portion of the chain corresponds to 280 to 284 (RTRGR). A helical transmembrane segment spans residues 285 to 305 (AIIHFAFLLSDSILLVATWVT). Topologically, residues 306 to 312 (HSSWLPS) are extracellular. Residues 313–333 (GIPLQLWLPVGCGCFFLGLAL) traverse the membrane as a helical segment. Residues 334 to 395 (RLVYYHWLHP…KDEAALPVKG (62 aa)) are Cytoplasmic-facing. Position 362 is a phosphoserine (Ser362). The residue at position 375 (Thr375) is a Phosphothreonine.

Belongs to the XK family. Interacts with BSG and NPTN; which act as chaperones to localize XKR8 at the cell membrane. As to quaternary structure, homodimer. Undergoes proteolytic processing by caspase-3 (CASP3), leading to its activation. Post-translationally, phosphorylation at Thr-375 activates the phospholipid scramblase activity.

It is found in the cell membrane. It localises to the cytoplasm. The protein localises to the perinuclear region. It carries out the reaction a 1,2-diacyl-sn-glycero-3-phospho-L-serine(in) = a 1,2-diacyl-sn-glycero-3-phospho-L-serine(out). Its activity is regulated as follows. Activated upon caspase cleavage to generate the XK-related protein 8, processed form. Does not act prior the onset of apoptosis. In terms of biological role, phospholipid scramblase that promotes phosphatidylserine exposure on apoptotic cell surface. Phosphatidylserine is a specific marker only present at the surface of apoptotic cells and acts as a specific signal for engulfment. Required for the clearance of apoptotic cells, such as engulfment of apoptotic germ cells by Sertoli cells, clearance of senescent neutrophils or regulation of bipolar cell numbers in the retina. Has no effect on calcium-induced exposure of phosphatidylserine. Promotes myoblast differentiation and survival. The chain is XK-related protein 8 from Pan troglodytes (Chimpanzee).